A 312-amino-acid chain; its full sequence is 2,3-dihydroxyphenylpropionate/2,3-dihydroxicinnamic acid 1,2-dioxygenase (312 aa).

The active-site Proton donor is histidine 115. Catalysis depends on histidine 179, which acts as the Proton acceptor.

It belongs to the LigB/MhpB extradiol dioxygenase family. As to quaternary structure, homotetramer. The cofactor is Fe(2+).

It catalyses the reaction 3-(2,3-dihydroxyphenyl)propanoate + O2 = (2Z,4E)-2-hydroxy-6-oxonona-2,4-dienedioate + H(+). It carries out the reaction (2E)-3-(2,3-dihydroxyphenyl)prop-2-enoate + O2 = (2Z,4E,7E)-2-hydroxy-6-oxonona-2,4,7-trienedioate + H(+). It functions in the pathway aromatic compound metabolism; 3-phenylpropanoate degradation. In terms of biological role, catalyzes the non-heme iron(II)-dependent oxidative cleavage of 2,3-dihydroxyphenylpropionic acid and 2,3-dihydroxicinnamic acid into 2-hydroxy-6-ketononadienedioate and 2-hydroxy-6-ketononatrienedioate, respectively. The protein is 2,3-dihydroxyphenylpropionate/2,3-dihydroxicinnamic acid 1,2-dioxygenase of Azotobacter vinelandii (strain DJ / ATCC BAA-1303).